A 369-amino-acid chain; its full sequence is Deoxyhypusine synthase (369 aa).

Residues 105-109 (SNLIS), 131-133 (TAG), Glu-137, and Asp-238 each bind NAD(+). 136-137 (EE) provides a ligand contact to spermidine. Residue Asp-243 participates in spermidine binding. Position 283 (Gly-283) interacts with NAD(+). His-288 provides a ligand contact to spermidine. Position 308-309 (308-309 (TA)) interacts with NAD(+). Residues 314 to 316 (GSD) and 323 to 329 (EAVSWGK) contribute to the spermidine site. Lys-329 functions as the Nucleophile in the catalytic mechanism. 342–343 (DA) serves as a coordination point for NAD(+).

It belongs to the deoxyhypusine synthase family. NAD(+) is required as a cofactor.

It carries out the reaction [eIF5A protein]-L-lysine + spermidine = [eIF5A protein]-deoxyhypusine + propane-1,3-diamine. It functions in the pathway protein modification; eIF5A hypusination. Functionally, catalyzes the NAD-dependent oxidative cleavage of spermidine and the subsequent transfer of the butylamine moiety of spermidine to the epsilon-amino group of a critical lysine residue of the eIF-5A precursor protein to form the intermediate deoxyhypusine residue. This is the first step of the post-translational modification of that lysine into an unusual amino acid residue named hypusine. Hypusination is unique to mature eIF-5A factor and is essential for its function. This Rattus norvegicus (Rat) protein is Deoxyhypusine synthase (Dhps).